A 438-amino-acid chain; its full sequence is uncharacterized protein (438 aa).

His-59 provides a ligand contact to Zn(2+). Glu-62 functions as the Proton acceptor in the catalytic mechanism. His-63 and Glu-139 together coordinate Zn(2+).

The protein belongs to the peptidase M16 family. The cofactor is Zn(2+).

This is an uncharacterized protein from Mycobacterium tuberculosis (strain CDC 1551 / Oshkosh).